The following is a 375-amino-acid chain: Protein RecA (375 aa).

Position 75–82 (75–82 (GPESSGKT)) interacts with ATP. Positions 339 to 375 (GPYAKMKDEQTEEAAGDQMDEDKPIDLSPNFDDDDAN) are disordered. Acidic residues predominate over residues 348 to 358 (QTEEAAGDQMD).

The protein belongs to the RecA family.

It is found in the cytoplasm. Its function is as follows. Can catalyze the hydrolysis of ATP in the presence of single-stranded DNA, the ATP-dependent uptake of single-stranded DNA by duplex DNA, and the ATP-dependent hybridization of homologous single-stranded DNAs. It interacts with LexA causing its activation and leading to its autocatalytic cleavage. The chain is Protein RecA from Corynebacterium jeikeium (strain K411).